The chain runs to 389 residues: Glutamate 5-kinase (389 aa).

K16 contacts ATP. Substrate contacts are provided by S56, D143, and N155. 175–176 (SD) provides a ligand contact to ATP. Residues 281–358 (AGELHVDEGA…AEIEAILGYA (78 aa)) enclose the PUA domain.

The protein belongs to the glutamate 5-kinase family.

Its subcellular location is the cytoplasm. It carries out the reaction L-glutamate + ATP = L-glutamyl 5-phosphate + ADP. It functions in the pathway amino-acid biosynthesis; L-proline biosynthesis; L-glutamate 5-semialdehyde from L-glutamate: step 1/2. Its function is as follows. Catalyzes the transfer of a phosphate group to glutamate to form L-glutamate 5-phosphate. This Rhizobium rhizogenes (strain K84 / ATCC BAA-868) (Agrobacterium radiobacter) protein is Glutamate 5-kinase.